The primary structure comprises 100 residues: Small ribosomal subunit protein uS14c (100 aa).

Belongs to the universal ribosomal protein uS14 family. Part of the 30S ribosomal subunit.

It is found in the plastid. Its subcellular location is the chloroplast. In terms of biological role, binds 16S rRNA, required for the assembly of 30S particles. This chain is Small ribosomal subunit protein uS14c, found in Morus indica (Mulberry).